A 610-amino-acid chain; its full sequence is Elongation factor 4 (610 aa).

Residues 7–189 (SRIRNFSIIA…AIVQRIPPPK (183 aa)) form the tr-type G domain. GTP-binding positions include 19-24 (DHGKST) and 136-139 (NKID).

It belongs to the TRAFAC class translation factor GTPase superfamily. Classic translation factor GTPase family. LepA subfamily.

It is found in the cell inner membrane. It carries out the reaction GTP + H2O = GDP + phosphate + H(+). In terms of biological role, required for accurate and efficient protein synthesis under certain stress conditions. May act as a fidelity factor of the translation reaction, by catalyzing a one-codon backward translocation of tRNAs on improperly translocated ribosomes. Back-translocation proceeds from a post-translocation (POST) complex to a pre-translocation (PRE) complex, thus giving elongation factor G a second chance to translocate the tRNAs correctly. Binds to ribosomes in a GTP-dependent manner. This chain is Elongation factor 4, found in Thermus thermophilus (strain ATCC 27634 / DSM 579 / HB8).